The sequence spans 188 residues: dCTP deaminase (188 aa).

DCTP-binding positions include 111-116, 135-137, Q156, Y170, and Q180; these read KSTYAR and TLE. The Proton donor/acceptor role is filled by E137.

This sequence belongs to the dCTP deaminase family. As to quaternary structure, homotrimer.

It catalyses the reaction dCTP + H2O + H(+) = dUTP + NH4(+). It functions in the pathway pyrimidine metabolism; dUMP biosynthesis; dUMP from dCTP (dUTP route): step 1/2. In terms of biological role, catalyzes the deamination of dCTP to dUTP. The polypeptide is dCTP deaminase (Pseudomonas savastanoi pv. phaseolicola (strain 1448A / Race 6) (Pseudomonas syringae pv. phaseolicola (strain 1448A / Race 6))).